Reading from the N-terminus, the 323-residue chain is MAPKQDPKPKFQEGERVLCFHGPLLYEAKCVKVAIKDKQVKYFIHYSGWNKNWDEWVPESRVLKYVDANLQKQRELQKANQEQYAEGKMRGAAPGKKTSGLQQKNVEVKTKKNKQKTPGNGDGGSTSETPQPPRKKRARVDPTVENEETFMNRVEVKVKIPEELKPWLVDDWDLITRQKQLFYLPAKKNVDSILEDYANYKKSRGNTDNKEYAVNEVVAGIKEYFNVMLGTQLLYKFERPQYAEILADHPDAPMSQVYGAPHLLRLFVRIGAMLAYTPLDEKSLALLLNYLHDFLKYLAKNSATLFSASDYEVAPPEYHRKAV.

The 51-residue stretch at 12 to 62 (QEGERVLCFHGPLLYEAKCVKVAIKDKQVKYFIHYSGWNKNWDEWVPESRV) folds into the Tudor-knot domain. A disordered region spans residues 77–143 (QKANQEQYAE…RKKRARVDPT (67 aa)). The tract at residues 94–227 (PGKKTSGLQQ…VAGIKEYFNV (134 aa)) is sufficient for interaction with SIN3A. Lys104 carries the post-translational modification N6-acetyllysine. Positions 125–191 (STSETPQPPR…FYLPAKKNVD (67 aa)) are interaction with RB1-1. Positions 149-303 (TFMNRVEVKV…FLKYLAKNSA (155 aa)) are sufficient for interaction with PHF12. Residues 152 to 323 (NRVEVKVKIP…APPEYHRKAV (172 aa)) form the MRG domain. Residues 284-305 (LALLLNYLHDFLKYLAKNSATL) form an interaction with RB1-2 region.

Component of the NuA4 histone acetyltransferase complex which contains the catalytic subunit KAT5/TIP60 and the subunits EP400, TRRAP/PAF400, BRD8/SMAP, EPC1, DMAP1/DNMAP1, RUVBL1/TIP49, RUVBL2, ING3, actin, ACTL6A/BAF53A, MORF4L1/MRG15, MORF4L2/MRGX, MRGBP, YEATS4/GAS41, VPS72/YL1 and MEAF6. The NuA4 complex interacts with MYC and the adenovirus E1A protein. MORF4L1 may also participate in the formation of NuA4 related complexes which lack the KAT5/TIP60 catalytic subunit, but which include the SWI/SNF related protein SRCAP. Component of the mSin3A histone deacetylase complex, which includes SIN3A, HDAC2, ARID4B, MORF4L1, RBBP4/RbAp48, and RBBP7/RbAp46. May also interact with PHF12 and one or more as yet undefined members of the TLE (transducin-like enhancer of split) family of transcriptional repressors. Component of the SIN3B complex, which includes SIN3B, HDAC2 or HDAC1, PHF12 and MORF4L1. Interacts with RB1 and KAT8. Interacts with the N-terminus of MRFAP1. Found in a complex composed of MORF4L1, MRFAP1 and RB1. Interacts with the entire BRCA complex, which contains BRCA1, PALB2, BRCA2 and RAD51. Interacts with PALB2. Forms a complex with MSL1 and NUPR1.

The protein localises to the nucleus. Component of the NuA4 histone acetyltransferase (HAT) complex which is involved in transcriptional activation of select genes principally by acetylation of nucleosomal histones H4 and H2A. This modification may both alter nucleosome - DNA interactions and promote interaction of the modified histones with other proteins which positively regulate transcription. This complex may be required for the activation of transcriptional programs associated with oncogene and proto-oncogene mediated growth induction, tumor suppressor mediated growth arrest and replicative senescence, apoptosis, and DNA repair. The NuA4 complex ATPase and helicase activities seem to be, at least in part, contributed by the association of RUVBL1 and RUVBL2 with EP400. NuA4 may also play a direct role in DNA repair when directly recruited to sites of DNA damage. As part of the SIN3B complex represses transcription and counteracts the histone acetyltransferase activity of EP300 through the recognition H3K27ac marks by PHF12 and the activity of the histone deacetylase HDAC2. SIN3B complex is recruited downstream of the constitutively active genes transcriptional start sites through interaction with histones and mitigates histone acetylation and RNA polymerase II progression within transcribed regions contributing to the regulation of transcription. Required for homologous recombination repair (HRR) and resistance to mitomycin C (MMC). Involved in the localization of PALB2, BRCA2 and RAD51, but not BRCA1, to DNA-damage foci. This Rattus norvegicus (Rat) protein is Mortality factor 4-like protein 1 (Morf4l1).